The following is a 481-amino-acid chain: Beta-amyrin 28-monooxygenase (481 aa).

The chain crosses the membrane as a helical span at residues phenylalanine 4 to phenylalanine 24. Position 428 (cysteine 428) interacts with heme.

Belongs to the cytochrome P450 family. Heme is required as a cofactor. In terms of tissue distribution, mostly expressed in roots, and, to a lower extent, in stems and leaves. Accumulates only in the rhizome of plants.

It localises to the membrane. It catalyses the reaction beta-amyrin + 3 reduced [NADPH--hemoprotein reductase] + 3 O2 = oleanolate + 3 oxidized [NADPH--hemoprotein reductase] + 4 H2O + 4 H(+). Its pathway is secondary metabolite biosynthesis; terpenoid biosynthesis. Component of the oleanane-type triterpene saponins (e.g. ginsenosides or panaxosides) biosynthetic pathway. Catalyzes the carboxylation of beta-amyrin at the C-28 position to form oleanolic acid during ginsenoside biosynthesis, a class of tetracyclic triterpenoid saponins. This chain is Beta-amyrin 28-monooxygenase, found in Panax ginseng (Korean ginseng).